We begin with the raw amino-acid sequence, 183 residues long: DELTA-miturgitoxin-Cp1a (183 aa).

The signal sequence occupies residues 1–20 (MKFSLFFSVFFLAVLHACLS). The propeptide occupies 21-47 (ESEIDLEDEEHFMSSDSFLSEIQDESR). The short motif at 44-47 (DESR) is the Processing quadruplet motif element. Intrachain disulfides connect cysteine 51–cysteine 66, cysteine 58–cysteine 75, cysteine 65–cysteine 88, cysteine 77–cysteine 86, cysteine 115–cysteine 130, cysteine 122–cysteine 139, cysteine 129–cysteine 157, and cysteine 141–cysteine 155. Domain repeat units lie at residues 51–77 (CIER…KCTC) and 115–141 (CVPK…QCKC). Positions 51-141 (CIERNKECTN…GGIFKYQCKC (91 aa)) are 2 X approximate repeats with cysteine pattern C-C-CC-C-C. The interval 164 to 177 (QAIEGALRIAKKLI) is predicted alpha-helix. Tryptophan 181 carries the post-translational modification Tryptophan amide.

Belongs to the neurotoxin 19 (CSTX) family. Double-CSTX subfamily. Post-translationally, cleavage of the propeptide depends on the processing quadruplet motif (XXXR, with at least one of X being E). Expressed by the venom gland.

Its subcellular location is the secreted. The protein resides in the target cell membrane. Spider venom toxin that exhibits cytolytic activity by forming an alpha-helix across the membrane. Lethal to insect larvae. Causes instant paralysis and death in the larvae of the flesh fly (S.carnaria) at doses of 20 ug/g, at doses of less than 10 ug/g causes reversible paralysis. Has cytolytic activity against insect Sf9 cells. Causes stable and irreversible depolarization of fly muscle fibers, leading to contracture at higher toxin concentrations. Destabilizes membranes. The chain is DELTA-miturgitoxin-Cp1a from Cheiracanthium punctorium (Yellow sac spider).